Here is a 105-residue protein sequence, read N- to C-terminus: ESAT-6-like protein EsxB (105 aa).

The disordered stretch occupies residues 1 to 23 (MSQGFKTEADVMRNTAHRVDDTN). Basic and acidic residues predominate over residues 7–21 (TEADVMRNTAHRVDD).

This sequence belongs to the WXG100 family. CFP-10 subfamily. As to quaternary structure, forms a tight 1:1 complex with EsxB.

The polypeptide is ESAT-6-like protein EsxB (Corynebacterium diphtheriae (strain ATCC 700971 / NCTC 13129 / Biotype gravis)).